A 168-amino-acid polypeptide reads, in one-letter code: Small ribosomal subunit protein uS5 (168 aa).

Positions 17–80 constitute an S5 DRBM domain; that stretch reads IEDQLVAVNR…EDGKKKMINV (64 aa).

The protein belongs to the universal ribosomal protein uS5 family. Part of the 30S ribosomal subunit. Contacts proteins S4 and S8.

In terms of biological role, with S4 and S12 plays an important role in translational accuracy. Its function is as follows. Located at the back of the 30S subunit body where it stabilizes the conformation of the head with respect to the body. The chain is Small ribosomal subunit protein uS5 from Lactobacillus helveticus (strain DPC 4571).